Consider the following 200-residue polypeptide: High mobility group protein B3 (200 aa).

Residue Lys3 is modified to N6-acetyllysine. 2 DNA-binding regions (HMG box) span residues 9-79 (PKGK…KDYG) and 93-161 (PKRP…ADYK). Cys23 is modified (cysteine sulfonic acid (-SO3H); alternate). The cysteines at positions 23 and 45 are disulfide-linked. 2 positions are modified to N6-acetyllysine: Lys30 and Lys43. Cys45 is modified (cysteine sulfonic acid (-SO3H); alternate). The interval 71 to 97 (YDREMKDYGPAKGGKKKKDPNAPKRPP) is disordered. Ser98 bears the Phosphoserine mark. At Cys104 the chain carries Cysteine sulfonic acid (-SO3H). Residues Lys112 and Lys139 each carry the N6-acetyllysine modification. A disordered region spans residues 161–200 (KSKGKFDGAKGPAKVARKKVEEEEEEEEEEEEEEEEEEDE). Positions 182–200 (EEEEEEEEEEEEEEEEEDE) are enriched in acidic residues.

The protein belongs to the HMGB family. Post-translationally, reduction/oxidation of cysteine residues Cys-23, Cys-45 and Cys-104 and a possible intramolecular disulfide bond involving Cys-23 and Cys-45 give rise to different redox forms with specific functional activities in various cellular compartments: 1- fully reduced HMGB3 (HMGB3C23hC45hC104h), 2- disulfide HMGB3 (HMGB3C23-C45C104h) and 3- sulfonyl HMGB3 (HMGB3C23soC45soC104so). As to expression, expressed in bone marrow cells, specifically in primitive Lin-, c-kit+, Sca-1+, IL-7Ralpha- cells, and Ter119+ erythroid cells.

Its subcellular location is the nucleus. The protein resides in the chromosome. It is found in the cytoplasm. In terms of biological role, multifunctional protein with various roles in different cellular compartments. May act in a redox sensitive manner. Associates with chromatin and binds DNA with a preference for non-canonical DNA structures such as single-stranded DNA. Can bend DNA and enhance DNA flexibility by looping thus providing a mechanism to promote activities on various gene promoters. Proposed to be involved in the innate immune response to nucleic acids by acting as a cytoplasmic promiscuous immunogenic DNA/RNA sensor. Negatively regulates B-cell and myeloid cell differentiation. In hematopoietic stem cells may regulate the balance between self-renewal and differentiation. Involved in negative regulation of canonical Wnt signaling. The sequence is that of High mobility group protein B3 (Hmgb3) from Mus musculus (Mouse).